Here is a 491-residue protein sequence, read N- to C-terminus: MNNQPKTVRVRMAPSPTGSPHVGLVRTALFNWAFARHHHGTFVFRIEDTDRERSTQESYDAIIDLMRWLGLDWDEGPEVGGPHAPYFQSERGDIYRDALARLAESSYTYDCFCTNEEVDARRKASGSKVMGYDGFCRDLSTEQRAAFEAEGRRPVVRFRMPDGSITWHDLVRGDVTFETRFVPDYALCRANGDPLYTLVNPVDDAYMEITHVLRGEDLLSSTPRQIALYAALEELGIAKATPEFGHLPYVMGEGNKKLSKRDPEAHALAYRDQGFLPEGLLNYLALLGWAIAADRDVFSMEEMVAAFDIADVNPNPARFDMKKAEAINAAHMRLLSLDVMTERVLPFLKGAGVLSDPVNPADTQLLELAMPLVAERINKLTESVDMLGFLFVDEESFTRDEADAEKLLNDDGRAVVRRALDALERVGEWSTGAIQDALQAELVEAMGVKPRNAFGPVRVAVTGRRVSPPLFESMELLGRDRSLARLRSALG.

Positions 14 to 24 (PSPTGSPHVGL) match the 'HIGH' region motif. Zn(2+) is bound by residues Cys-111, Cys-113, Cys-136, and Asp-138. Positions 257-261 (KLSKR) match the 'KMSKS' region motif. Lys-260 serves as a coordination point for ATP.

It belongs to the class-I aminoacyl-tRNA synthetase family. Glutamate--tRNA ligase type 1 subfamily. As to quaternary structure, monomer. It depends on Zn(2+) as a cofactor.

It localises to the cytoplasm. The enzyme catalyses tRNA(Glu) + L-glutamate + ATP = L-glutamyl-tRNA(Glu) + AMP + diphosphate. Its function is as follows. Catalyzes the attachment of glutamate to tRNA(Glu) in a two-step reaction: glutamate is first activated by ATP to form Glu-AMP and then transferred to the acceptor end of tRNA(Glu). The protein is Glutamate--tRNA ligase of Nocardioides sp. (strain ATCC BAA-499 / JS614).